The following is a 363-amino-acid chain: RNA polymerase I-specific transcription initiation factor RRN5 (363 aa).

Residues 301–344 form a disordered region; sequence LSRRDAPPVHQDENQENQENQENQEQDNTASEGESEAERDEIDE. Basic and acidic residues predominate over residues 302 to 313; the sequence is SRRDAPPVHQDE. A compositionally biased stretch (low complexity) spans 317 to 328; that stretch reads NQENQENQEQDN. Residues 333–344 are compositionally biased toward acidic residues; that stretch reads GESEAERDEIDE.

In terms of assembly, component of the UAF (upstream activation factor) complex which consists of UAF30, RRN5, RRN9, RRN10, and histones H3 and H4.

Its subcellular location is the nucleus. The protein localises to the nucleolus. Component of the UAF (upstream activation factor) complex which interacts with the upstream element of the RNA polymerase I promoter and forms a stable preinitiation complex. Together with SPT15/TBP UAF seems to stimulate basal transcription to a fully activated level. This chain is RNA polymerase I-specific transcription initiation factor RRN5 (RRN5), found in Saccharomyces cerevisiae (strain ATCC 204508 / S288c) (Baker's yeast).